We begin with the raw amino-acid sequence, 427 residues long: Enolase 2 (427 aa).

Residue Q165 participates in (2R)-2-phosphoglycerate binding. Catalysis depends on E207, which acts as the Proton donor. The Mg(2+) site is built by D244, E287, and D314. (2R)-2-phosphoglycerate-binding residues include K339, R368, S369, and K390. K339 acts as the Proton acceptor in catalysis.

The protein belongs to the enolase family. As to quaternary structure, component of the RNA degradosome, a multiprotein complex involved in RNA processing and mRNA degradation. The cofactor is Mg(2+).

The protein localises to the cytoplasm. The protein resides in the secreted. It is found in the cell surface. The enzyme catalyses (2R)-2-phosphoglycerate = phosphoenolpyruvate + H2O. It participates in carbohydrate degradation; glycolysis; pyruvate from D-glyceraldehyde 3-phosphate: step 4/5. In terms of biological role, catalyzes the reversible conversion of 2-phosphoglycerate (2-PG) into phosphoenolpyruvate (PEP). It is essential for the degradation of carbohydrates via glycolysis. The protein is Enolase 2 of Pseudomonas syringae pv. syringae (strain B728a).